The sequence spans 291 residues: Probable L-ascorbate peroxidase 4, peroxisomal (291 aa).

The active-site Proton acceptor is the His-40. Position 160 (His-160) interacts with heme b. Thr-161, Thr-177, and Asp-184 together coordinate K(+). A helical membrane pass occupies residues 263–283 (VLAQSAVGVAVAAAVVIVSYL).

Belongs to the peroxidase family. Ascorbate peroxidase subfamily. Heme b is required as a cofactor. Expressed in leaves, stems and flowers.

The protein localises to the peroxisome membrane. It carries out the reaction L-ascorbate + H2O2 = L-dehydroascorbate + 2 H2O. Functionally, plays a key role in hydrogen peroxide removal. The sequence is that of Probable L-ascorbate peroxidase 4, peroxisomal from Oryza sativa subsp. japonica (Rice).